A 416-amino-acid polypeptide reads, in one-letter code: MSLSNKLSVKDLDVAGKRVFIRVDFNVPLDGDKITNNQRIVAALPTIQYVLDHKPKVVVLASHLGRPNGEVNPKFSLKPVAAELSSLLGKKVTFLNDSVGPEVEKAVNSASNGEVILLENLRFHIEEEGSQKKDGQKIKADKEAVARFRKQLTALADVYVNDAFGTAHRAHSSMVGFELEQRAAGFLMAKELTYFAKALENPVRPFLAILGGAKVSDKIQLIDNLLDKVDSIIIGGGMAFTFIKVLDNVAIGNSLFDEAGAKLVPGLVEKAKKNNVKLVLPVDFVTADAFSKDAKVGEATVESGIPDGLQGLDAGPKSRELFAATIAEAKTIVWNGPPGVFEFDKFAEGTKSMLAAAIKNAQNGGTVIVGGGDTATVAKKFGGADKLSHVSTGGGASLELLEGKELPGVVYLSKKA.

Val23, Asp24, Phe25, Asn26, Gln38, Arg39, Ser62, His63, Gly65, Arg66, Leu121, Arg122, His168, and Arg169 together coordinate (2R)-3-phosphoglycerate. Gly212 contributes to the ADP binding site. Gly212 contacts CDP. AMP contacts are provided by Ala213 and Lys214. Ala213 provides a ligand contact to ATP. A Mg(2+)-binding site is contributed by Ala213. A CDP-binding site is contributed by Asp217. Position 217 (Asp217) interacts with Mg(2+). Residue Lys218 participates in AMP binding. Lys218 contacts ATP. Position 236 (Gly236) interacts with ADP. Residue Gly236 coordinates CDP. Residues Gly237 and Gly311 each contribute to the AMP site. ATP contacts are provided by Gly237 and Gly311. Residues Gly336 and Phe341 each contribute to the CDP site. ADP is bound at residue Phe341. Glu342 provides a ligand contact to AMP. ATP contacts are provided by Glu342, Asp373, and Thr374. Residue Asp373 participates in Mg(2+) binding.

The protein belongs to the phosphoglycerate kinase family. Monomer. The cofactor is Mg(2+).

The protein resides in the cytoplasm. It is found in the mitochondrion. It catalyses the reaction (2R)-3-phosphoglycerate + ATP = (2R)-3-phospho-glyceroyl phosphate + ADP. It functions in the pathway carbohydrate degradation; glycolysis; pyruvate from D-glyceraldehyde 3-phosphate: step 2/5. Functionally, catalyzes one of the two ATP producing reactions in the glycolytic pathway via the reversible conversion of 1,3-diphosphoglycerate to 3-phosphoglycerate. Both L- and D- forms of purine and pyrimidine nucleotides can be used as substrates, but the activity is much lower on pyrimidines. Negatively regulates the biosynthesis of acetyl-CoA from pyruvate in the mitochondrion. This is Phosphoglycerate kinase (PGK1) from Komagataella pastoris (Yeast).